We begin with the raw amino-acid sequence, 498 residues long: Probable malate:quinone oxidoreductase (498 aa).

The protein belongs to the MQO family. The cofactor is FAD.

The catalysed reaction is (S)-malate + a quinone = a quinol + oxaloacetate. It functions in the pathway carbohydrate metabolism; tricarboxylic acid cycle; oxaloacetate from (S)-malate (quinone route): step 1/1. This chain is Probable malate:quinone oxidoreductase, found in Prochlorococcus marinus (strain MIT 9301).